Here is a 309-residue protein sequence, read N- to C-terminus: Probable manganese-dependent inorganic pyrophosphatase (309 aa).

6 residues coordinate Mn(2+): H9, D13, D15, D75, H97, and D149.

The protein belongs to the PPase class C family. Mn(2+) is required as a cofactor.

Its subcellular location is the cytoplasm. It catalyses the reaction diphosphate + H2O = 2 phosphate + H(+). The polypeptide is Probable manganese-dependent inorganic pyrophosphatase (Staphylococcus epidermidis (strain ATCC 35984 / DSM 28319 / BCRC 17069 / CCUG 31568 / BM 3577 / RP62A)).